Consider the following 217-residue polypeptide: Putative threonylcarbamoyl-AMP synthase (217 aa).

One can recognise a YrdC-like domain in the interval 14 to 199 (SRGIVSAVGA…TPRVLRPGPV (186 aa)).

Belongs to the SUA5 family.

The protein resides in the cytoplasm. It carries out the reaction L-threonine + hydrogencarbonate + ATP = L-threonylcarbamoyladenylate + diphosphate + H2O. Functionally, required for the formation of a threonylcarbamoyl group on adenosine at position 37 (t(6)A37) in tRNAs that read codons beginning with adenine. Catalyzes the conversion of L-threonine, HCO(3)(-)/CO(2) and ATP to give threonylcarbamoyl-AMP (TC-AMP) as the acyladenylate intermediate, with the release of diphosphate. This chain is Putative threonylcarbamoyl-AMP synthase, found in Mycobacterium tuberculosis (strain CDC 1551 / Oshkosh).